We begin with the raw amino-acid sequence, 423 residues long: Glucose-1-phosphate adenylyltransferase (423 aa).

Alpha-D-glucose 1-phosphate is bound by residues Tyr-98, Gly-163, 178–179 (EK), and Ser-189.

Belongs to the bacterial/plant glucose-1-phosphate adenylyltransferase family. Homotetramer.

The enzyme catalyses alpha-D-glucose 1-phosphate + ATP + H(+) = ADP-alpha-D-glucose + diphosphate. It functions in the pathway glycan biosynthesis; glycogen biosynthesis. Its function is as follows. Involved in the biosynthesis of ADP-glucose, a building block required for the elongation reactions to produce glycogen. Catalyzes the reaction between ATP and alpha-D-glucose 1-phosphate (G1P) to produce pyrophosphate and ADP-Glc. This chain is Glucose-1-phosphate adenylyltransferase, found in Thermotoga sp. (strain RQ2).